A 154-amino-acid polypeptide reads, in one-letter code: Deoxyuridine 5'-triphosphate nucleotidohydrolase (154 aa).

Substrate contacts are provided by residues 70-72, Asn83, 87-89, and Met97; these read RSG and LID.

Belongs to the dUTPase family. Requires Mg(2+) as cofactor.

It carries out the reaction dUTP + H2O = dUMP + diphosphate + H(+). Its pathway is pyrimidine metabolism; dUMP biosynthesis; dUMP from dCTP (dUTP route): step 2/2. Functionally, this enzyme is involved in nucleotide metabolism: it produces dUMP, the immediate precursor of thymidine nucleotides and it decreases the intracellular concentration of dUTP so that uracil cannot be incorporated into DNA. The protein is Deoxyuridine 5'-triphosphate nucleotidohydrolase of Buchnera aphidicola subsp. Acyrthosiphon pisum (strain 5A).